The chain runs to 382 residues: Intermediate transcription factor 3 large subunit (382 aa).

Belongs to the orthopoxvirus OPG150 family. As to quaternary structure, heterodimerizes with protein A8 to form the virus intermediate transcription factor (VITF)-3.

Its function is as follows. Acts with RNA polymerase to initiate transcription from intermediate gene promoters. The polypeptide is Intermediate transcription factor 3 large subunit (OPG150) (Bos taurus (Bovine)).